The sequence spans 334 residues: Cytosolic Fe-S cluster assembly factor NBP35 (334 aa).

The [4Fe-4S] cluster site is built by cysteine 33, cysteine 47, cysteine 50, and cysteine 56. 86 to 93 (GKGGVGKS) is an ATP binding site. [4Fe-4S] cluster is bound by residues cysteine 259 and cysteine 262.

Belongs to the Mrp/NBP35 ATP-binding proteins family. NUBP1/NBP35 subfamily. As to quaternary structure, heterotetramer of 2 NBP35 and 2 CFD1 chains. [4Fe-4S] cluster is required as a cofactor.

The protein resides in the cytoplasm. Its subcellular location is the nucleus. Functionally, component of the cytosolic iron-sulfur (Fe/S) protein assembly (CIA) machinery. Required for maturation of extramitochondrial Fe-S proteins. The NBP35-CFD1 heterotetramer forms a Fe-S scaffold complex, mediating the de novo assembly of an Fe-S cluster and its transfer to target apoproteins. Required for biogenesis and export of both ribosomal subunits, which may reflect a role in assembly of the Fe/S clusters in RLI1, a protein which performs rRNA processing and ribosome export. The sequence is that of Cytosolic Fe-S cluster assembly factor NBP35 from Candida glabrata (strain ATCC 2001 / BCRC 20586 / JCM 3761 / NBRC 0622 / NRRL Y-65 / CBS 138) (Yeast).